We begin with the raw amino-acid sequence, 165 residues long: UPF0303 protein Bphy_1660 (165 aa).

It belongs to the UPF0303 family.

This Paraburkholderia phymatum (strain DSM 17167 / CIP 108236 / LMG 21445 / STM815) (Burkholderia phymatum) protein is UPF0303 protein Bphy_1660.